The following is a 398-amino-acid chain: Protochlorophyllide reductase, chloroplastic (398 aa).

The protein belongs to the short-chain dehydrogenases/reductases (SDR) family. POR subfamily.

It is found in the plastid. It localises to the chloroplast. The catalysed reaction is chlorophyllide a + NADP(+) = protochlorophyllide a + NADPH + H(+). It participates in porphyrin-containing compound metabolism; chlorophyll biosynthesis. Its function is as follows. Phototransformation of protochlorophyllide (Pchlide) to chlorophyllide (Chlide). This Daucus carota (Wild carrot) protein is Protochlorophyllide reductase, chloroplastic (POR1).